The chain runs to 307 residues: Pantothenate kinase (307 aa).

ATP is bound at residue 90–97 (GSVAVGKS).

Belongs to the prokaryotic pantothenate kinase family.

It localises to the cytoplasm. It carries out the reaction (R)-pantothenate + ATP = (R)-4'-phosphopantothenate + ADP + H(+). Its pathway is cofactor biosynthesis; coenzyme A biosynthesis; CoA from (R)-pantothenate: step 1/5. The sequence is that of Pantothenate kinase from Limosilactobacillus reuteri subsp. reuteri (strain JCM 1112) (Lactobacillus reuteri).